A 62-amino-acid chain; its full sequence is Photosystem II reaction center protein Z (62 aa).

The next 2 membrane-spanning stretches (helical) occupy residues Ala8 to Ala28 and Phe41 to Ile61.

This sequence belongs to the PsbZ family. In terms of assembly, PSII is composed of 1 copy each of membrane proteins PsbA, PsbB, PsbC, PsbD, PsbE, PsbF, PsbH, PsbI, PsbJ, PsbK, PsbL, PsbM, PsbT, PsbY, PsbZ, Psb30/Ycf12, at least 3 peripheral proteins of the oxygen-evolving complex and a large number of cofactors. It forms dimeric complexes.

Its subcellular location is the plastid. It is found in the chloroplast thylakoid membrane. In terms of biological role, may control the interaction of photosystem II (PSII) cores with the light-harvesting antenna, regulates electron flow through the 2 photosystem reaction centers. PSII is a light-driven water plastoquinone oxidoreductase, using light energy to abstract electrons from H(2)O, generating a proton gradient subsequently used for ATP formation. This chain is Photosystem II reaction center protein Z, found in Pelargonium hortorum (Common geranium).